The primary structure comprises 719 residues: Photosystem I P700 chlorophyll a apoprotein A1 (719 aa).

Helical transmembrane passes span 59-82 (IFGA…FHGA), 145-168 (LYCT…FHYH), 184-208 (LNHH…HVSL), 280-298 (TAHH…GHMY), 335-358 (WHAQ…HHMY), 374-400 (LSLF…IFMV), 422-444 (AIIS…LYIH), and 520-538 (FLVH…LILL). [4Fe-4S] cluster-binding residues include Cys-562 and Cys-571. The next 2 helical transmembrane spans lie at 578–599 (HVFL…HFSW) and 653–675 (LSAY…MFLF). Position 664 (His-664) interacts with chlorophyll a'. 2 residues coordinate chlorophyll a: Met-672 and Tyr-680. Trp-681 contacts phylloquinone. Residues 713 to 719 (AVGVTHT) form a helical membrane-spanning segment.

Belongs to the PsaA/PsaB family. As to quaternary structure, the PsaA/B heterodimer binds the P700 chlorophyll special pair and subsequent electron acceptors. PSI consists of a core antenna complex that captures photons, and an electron transfer chain that converts photonic excitation into a charge separation. The eukaryotic PSI reaction center is composed of at least 11 subunits. P700 is a chlorophyll a/chlorophyll a' dimer, A0 is one or more chlorophyll a, A1 is one or both phylloquinones and FX is a shared 4Fe-4S iron-sulfur center. serves as cofactor.

The protein resides in the plastid. Its subcellular location is the chloroplast thylakoid membrane. It carries out the reaction reduced [plastocyanin] + hnu + oxidized [2Fe-2S]-[ferredoxin] = oxidized [plastocyanin] + reduced [2Fe-2S]-[ferredoxin]. In terms of biological role, psaA and PsaB bind P700, the primary electron donor of photosystem I (PSI), as well as the electron acceptors A0, A1 and FX. PSI is a plastocyanin-ferredoxin oxidoreductase, converting photonic excitation into a charge separation, which transfers an electron from the donor P700 chlorophyll pair to the spectroscopically characterized acceptors A0, A1, FX, FA and FB in turn. Oxidized P700 is reduced on the lumenal side of the thylakoid membrane by plastocyanin. The protein is Photosystem I P700 chlorophyll a apoprotein A1 of Asplenium nidus (Bird's nest fern).